We begin with the raw amino-acid sequence, 152 residues long: SsrA-binding protein (152 aa).

Belongs to the SmpB family.

It localises to the cytoplasm. Required for rescue of stalled ribosomes mediated by trans-translation. Binds to transfer-messenger RNA (tmRNA), required for stable association of tmRNA with ribosomes. tmRNA and SmpB together mimic tRNA shape, replacing the anticodon stem-loop with SmpB. tmRNA is encoded by the ssrA gene; the 2 termini fold to resemble tRNA(Ala) and it encodes a 'tag peptide', a short internal open reading frame. During trans-translation Ala-aminoacylated tmRNA acts like a tRNA, entering the A-site of stalled ribosomes, displacing the stalled mRNA. The ribosome then switches to translate the ORF on the tmRNA; the nascent peptide is terminated with the 'tag peptide' encoded by the tmRNA and targeted for degradation. The ribosome is freed to recommence translation, which seems to be the essential function of trans-translation. The protein is SsrA-binding protein of Helicobacter pylori (strain Shi470).